We begin with the raw amino-acid sequence, 97 residues long: Aspartyl/glutamyl-tRNA(Asn/Gln) amidotransferase subunit C (97 aa).

A disordered region spans residues 58 to 78 (LPQGRLRKDTPRDPLDRENAL). Basic and acidic residues predominate over residues 63–77 (LRKDTPRDPLDRENA).

It belongs to the GatC family. In terms of assembly, heterotrimer of A, B and C subunits.

The enzyme catalyses L-glutamyl-tRNA(Gln) + L-glutamine + ATP + H2O = L-glutaminyl-tRNA(Gln) + L-glutamate + ADP + phosphate + H(+). The catalysed reaction is L-aspartyl-tRNA(Asn) + L-glutamine + ATP + H2O = L-asparaginyl-tRNA(Asn) + L-glutamate + ADP + phosphate + 2 H(+). Functionally, allows the formation of correctly charged Asn-tRNA(Asn) or Gln-tRNA(Gln) through the transamidation of misacylated Asp-tRNA(Asn) or Glu-tRNA(Gln) in organisms which lack either or both of asparaginyl-tRNA or glutaminyl-tRNA synthetases. The reaction takes place in the presence of glutamine and ATP through an activated phospho-Asp-tRNA(Asn) or phospho-Glu-tRNA(Gln). The chain is Aspartyl/glutamyl-tRNA(Asn/Gln) amidotransferase subunit C from Saccharolobus islandicus (strain Y.N.15.51 / Yellowstone #2) (Sulfolobus islandicus).